The following is a 346-amino-acid chain: NADH-ubiquinone oxidoreductase chain 2 (346 aa).

Transmembrane regions (helical) follow at residues 1–21, 25–45, 60–80, 95–115, 124–144, 149–169, 178–195, 200–219, 242–262, 274–294, and 326–346; these read MNPHATPVLVLSLALGTTITI, HWVLAWTGLEINTLAIIPLIS, FLTQAAASALVLFSSMTNAWA, CLLLTAAIAIKLGLVPFHFWF, LMTALLLSTLMKFPPLTLLLM, LNPALLTTMALASAALGGWMG, ILAFSSISHLGWIAIILV, LALLTFYLYAIMTSAVFMAL, ATLMLVLLSLAGLPPLTGFMP, EMTPAAMAIAMLSLLSLFFYL, and AILASLSILLLPLSPMIHAIV.

Belongs to the complex I subunit 2 family.

It is found in the mitochondrion inner membrane. The catalysed reaction is a ubiquinone + NADH + 5 H(+)(in) = a ubiquinol + NAD(+) + 4 H(+)(out). Functionally, core subunit of the mitochondrial membrane respiratory chain NADH dehydrogenase (Complex I) that is believed to belong to the minimal assembly required for catalysis. Complex I functions in the transfer of electrons from NADH to the respiratory chain. The immediate electron acceptor for the enzyme is believed to be ubiquinone. This Mareca falcata (Falcated duck) protein is NADH-ubiquinone oxidoreductase chain 2 (MT-ND2).